A 55-amino-acid polypeptide reads, in one-letter code: Major pollen allergen Dac g 4 (55 aa).

This Dactylis glomerata (Orchard grass) protein is Major pollen allergen Dac g 4.